A 370-amino-acid chain; its full sequence is tRNA-specific 2-thiouridylase MnmA (370 aa).

ATP is bound by residues alanine 25 to serine 32 and leucine 51. Cysteine 112 (nucleophile) is an active-site residue. Cysteines 112 and 211 form a disulfide. Glycine 137 is a binding site for ATP. Residues lysine 161–glutamine 163 are interaction with tRNA. Residue cysteine 211 is the Cysteine persulfide intermediate of the active site. An interaction with tRNA region spans residues arginine 316–tyrosine 317.

It belongs to the MnmA/TRMU family.

The protein localises to the cytoplasm. The enzyme catalyses S-sulfanyl-L-cysteinyl-[protein] + uridine(34) in tRNA + AH2 + ATP = 2-thiouridine(34) in tRNA + L-cysteinyl-[protein] + A + AMP + diphosphate + H(+). Its function is as follows. Catalyzes the 2-thiolation of uridine at the wobble position (U34) of tRNA, leading to the formation of s(2)U34. This is tRNA-specific 2-thiouridylase MnmA from Synechococcus sp. (strain JA-3-3Ab) (Cyanobacteria bacterium Yellowstone A-Prime).